The primary structure comprises 527 residues: Peptide chain release factor 3 (527 aa).

A tr-type G domain is found at 9 to 278; sequence DIRRTFAIIS…GLTQWAPKPQ (270 aa). GTP contacts are provided by residues 18-25, 86-90, and 140-143; these read SHPDAGKT, DTPGH, and NKCD.

Belongs to the TRAFAC class translation factor GTPase superfamily. Classic translation factor GTPase family. PrfC subfamily.

Its subcellular location is the cytoplasm. Functionally, increases the formation of ribosomal termination complexes and stimulates activities of RF-1 and RF-2. It binds guanine nucleotides and has strong preference for UGA stop codons. It may interact directly with the ribosome. The stimulation of RF-1 and RF-2 is significantly reduced by GTP and GDP, but not by GMP. This Shewanella denitrificans (strain OS217 / ATCC BAA-1090 / DSM 15013) protein is Peptide chain release factor 3.